We begin with the raw amino-acid sequence, 62 residues long: Conotoxin TeAr151 (62 aa).

The signal sequence occupies residues 1 to 22; that stretch reads MRCLPVFVVLLLLIASAPSVDA. The propeptide occupies 23–47; the sequence is QPKTKDDVPLAPLHDNIQNTLQTLR. Met55 is modified (methionine sulfoxide; partial). Ser60 is modified (serine amide).

It belongs to the conotoxin T superfamily. Contains 2 disulfide bonds. In terms of processing, contains 2 disulfide bonds that can be either 'C1-C3, C2-C4' or 'C1-C4, C2-C3', since these disulfide connectivities have been observed for conotoxins with cysteine framework V (for examples, see AC P0DQQ7 and AC P81755).. In terms of tissue distribution, expressed by the venom duct. Is mostly present in part 5 of the venom duct (distal part near the pharynx), and less abundantly present in part 4 of the venom duct.

The protein resides in the secreted. In Conus textile (Cloth-of-gold cone), this protein is Conotoxin TeAr151.